A 193-amino-acid polypeptide reads, in one-letter code: Ion-translocating oxidoreductase complex subunit A (193 aa).

Helical transmembrane passes span 5-25, 39-59, 72-92, 102-122, 134-154, and 171-191; these read ILLI…FLGL, IGMG…AYLV, LRTL…EMVI, LLGI…VALL, VIYG…FAAL, and SIAL…SGLV.

This sequence belongs to the NqrDE/RnfAE family. As to quaternary structure, the complex is composed of six subunits: RnfA, RnfB, RnfC, RnfD, RnfE and RnfG.

It is found in the cell inner membrane. In terms of biological role, part of a membrane-bound complex that couples electron transfer with translocation of ions across the membrane. The protein is Ion-translocating oxidoreductase complex subunit A of Histophilus somni (strain 129Pt) (Haemophilus somnus).